The following is a 258-amino-acid chain: Small ribosomal subunit protein mS23 (258 aa).

Over residues 230–239 the composition is skewed to polar residues; it reads KKNSTKQSWA. Residues 230–258 form a disordered region; the sequence is KKNSTKQSWAEATEEKEEQDSAEPEELKL. Residues 241-258 are compositionally biased toward acidic residues; it reads ATEEKEEQDSAEPEELKL.

This sequence belongs to the mitochondrion-specific ribosomal protein mS23 family. As to quaternary structure, component of the mitochondrial small ribosomal subunit.

The protein localises to the mitochondrion. This is Small ribosomal subunit protein mS23 (RSM25) from Eremothecium gossypii (strain ATCC 10895 / CBS 109.51 / FGSC 9923 / NRRL Y-1056) (Yeast).